A 281-amino-acid chain; its full sequence is ATP synthase gamma chain (281 aa).

This sequence belongs to the ATPase gamma chain family. As to quaternary structure, F-type ATPases have 2 components, CF(1) - the catalytic core - and CF(0) - the membrane proton channel. CF(1) has five subunits: alpha(3), beta(3), gamma(1), delta(1), epsilon(1). CF(0) has three main subunits: a, b and c.

The protein localises to the cell membrane. Produces ATP from ADP in the presence of a proton gradient across the membrane. The gamma chain is believed to be important in regulating ATPase activity and the flow of protons through the CF(0) complex. The protein is ATP synthase gamma chain of Mesoplasma florum (strain ATCC 33453 / NBRC 100688 / NCTC 11704 / L1) (Acholeplasma florum).